The sequence spans 201 residues: Single-stranded DNA-binding protein DdrA (201 aa).

This sequence belongs to the RAD52 family. As to quaternary structure, the truncated form (1-160) of DdrA forms heptameric rings that can assemble into a 3-ring structure.

Functionally, ssDNA-binding protein that contributes to the ionizing radiation resistance of D.deserti. Plays a role in DNA repair and genome reconstitution, in a RecA-independent process, since DdrA is essential for recovery from severe genomic fragmentation as a result of exposure to severe levels of ionizing radiation in an environment lacking nutrients. In vitro, binds to the 3'-ends of single-stranded DNA, and probably protects them from nuclease degradation. Thus, DdrA is part of a DNA end-protection system that helps to preserve genome integrity following irradiation or desiccation. The chain is Single-stranded DNA-binding protein DdrA (ddrA) from Deinococcus deserti (strain DSM 17065 / CIP 109153 / LMG 22923 / VCD115).